The following is an 807-amino-acid chain: Dynein axonemal intermediate chain 4 (807 aa).

Polar residues-rich tracts occupy residues 1–11 (MHSSPTSTRKQ) and 22–31 (PRKSISFINP). Disordered stretches follow at residues 1–44 (MHSS…AASN) and 300–320 (YSSK…DSES). Positions 32 to 43 (SKSSAGKGYAAS) are enriched in low complexity. Basic and acidic residues predominate over residues 308–317 (AKDRDPKIQD). WD repeat units lie at residues 493 to 533 (QSSY…NIPV), 542 to 590 (KHLG…DCHD), 617 to 657 (SRQA…QYLE), 661 to 701 (GHKG…PFLS), 704 to 743 (PTTY…LDPL), and 749 to 788 (NPGI…TASD).

In terms of assembly, part of the multisubunit axonemal dynein complex formed at least of two heavy chains and a number of intermediate and light chains. Associated with axonemal dynein subunits such as, DNAH2, DNAI3, and DYNLT1. Interacts with DYNLT1. In terms of tissue distribution, highly expressed in tissues containing motile cilia, including the trachea, lung, oviduct, and testis.

The protein resides in the cytoplasm. It is found in the cytoskeleton. Its subcellular location is the flagellum axoneme. It localises to the cilium axoneme. The protein localises to the dynein axonemal particle. Its function is as follows. Plays a critical role in the assembly of axonemal dynein complex, thereby playing a role in ciliary motility. The protein is Dynein axonemal intermediate chain 4 (Dnai4) of Mus musculus (Mouse).